Reading from the N-terminus, the 292-residue chain is NAD kinase (292 aa).

The active-site Proton acceptor is the D73. NAD(+) contacts are provided by residues 73–74 (DG), 147–148 (NE), H158, R175, D177, 188–193 (TAYSLS), and Q247.

The protein belongs to the NAD kinase family. A divalent metal cation is required as a cofactor.

The protein localises to the cytoplasm. It catalyses the reaction NAD(+) + ATP = ADP + NADP(+) + H(+). In terms of biological role, involved in the regulation of the intracellular balance of NAD and NADP, and is a key enzyme in the biosynthesis of NADP. Catalyzes specifically the phosphorylation on 2'-hydroxyl of the adenosine moiety of NAD to yield NADP. This Escherichia coli O7:K1 (strain IAI39 / ExPEC) protein is NAD kinase.